The sequence spans 259 residues: uncharacterized protein (259 aa).

Residues 171-259 (LSKMPVPQSP…SYSTYEDDDF (89 aa)) are disordered. Residues 179–201 (SPSVPTMPSVNNDQPTQKPNKIT) are compositionally biased toward polar residues. The segment covering 202–211 (RNYKPKHQHN) has biased composition (basic residues). The span at 212–236 (YKPNYQPNYQPNYGQNCSNSHSNDY) shows a compositional bias: polar residues.

It is found in the virion. This is an uncharacterized protein from Acanthamoeba polyphaga (Amoeba).